We begin with the raw amino-acid sequence, 126 residues long: Glycine cleavage system H protein (126 aa).

Residues 20-102 (IGTIGITDYA…LGDGWFFKVR (83 aa)) enclose the Lipoyl-binding domain. An N6-lipoyllysine modification is found at Lys61.

The protein belongs to the GcvH family. The glycine cleavage system is composed of four proteins: P, T, L and H. The cofactor is (R)-lipoate.

In terms of biological role, the glycine cleavage system catalyzes the degradation of glycine. The H protein shuttles the methylamine group of glycine from the P protein to the T protein. In Rhodospirillum rubrum (strain ATCC 11170 / ATH 1.1.1 / DSM 467 / LMG 4362 / NCIMB 8255 / S1), this protein is Glycine cleavage system H protein.